Reading from the N-terminus, the 193-residue chain is Putative manganese efflux pump MntP (193 aa).

6 consecutive transmembrane segments (helical) span residues 8–28 (LLAI…GIIL), 37–57 (LVMA…GWMF), 61–81 (FSHL…AFLG), 109–129 (MAIA…LLGI), 138–158 (PILI…YFGI), and 172–192 (LWGG…HLFL).

The protein belongs to the MntP (TC 9.B.29) family.

The protein localises to the cell inner membrane. Probably functions as a manganese efflux pump. The sequence is that of Putative manganese efflux pump MntP from Bacteroides thetaiotaomicron (strain ATCC 29148 / DSM 2079 / JCM 5827 / CCUG 10774 / NCTC 10582 / VPI-5482 / E50).